A 200-amino-acid polypeptide reads, in one-letter code: Male-specific histamine-binding salivary protein (200 aa).

An N-terminal signal peptide occupies residues 1–18 (MKVLLLVLGAALCQNADA). Residues S37, D41, D56, and W59 each coordinate histamine. 2 cysteine pairs are disulfide-bonded: C65–C193 and C137–C169. N-linked (GlcNAc...) asparagine glycosylation is present at N79. Positions 97, 115, 125, 138, 154, and 156 each coordinate histamine.

This sequence belongs to the calycin superfamily. Histamine-binding salivary protein family. Homodimer; disulcde-linked. In terms of processing, N-glycosylated. Expressed in salivary glands.

Its subcellular location is the secreted. In terms of biological role, salivary tick protein that acts by scavenging histamine at the wound site, outcompeting histamine receptors for histamine, thereby overcoming host inflammatory responses. Binds histamine with a high-affinity (Kd=1.2 nM). Contains two binding histamine sites (H and L), that appear to bind histamine with differing affinities. The chain is Male-specific histamine-binding salivary protein from Rhipicephalus appendiculatus (Brown ear tick).